The chain runs to 280 residues: Probable inactive shikimate kinase like 1, chloroplastic (280 aa).

Residues 1–54 (MEIFSASASLTLTGFVPRLLPLLSPQARTTLCKPLLSSSSTRLISCHSRIAPSR) constitute a chloroplast transit peptide.

Belongs to the shikimate kinase family.

The protein localises to the plastid. It localises to the chloroplast. Functionally, required for chloroplast biogenesis. This chain is Probable inactive shikimate kinase like 1, chloroplastic (SKL1), found in Arabidopsis thaliana (Mouse-ear cress).